The following is a 256-amino-acid chain: Ribosomal RNA small subunit methyltransferase A (256 aa).

N12, L14, G39, E60, D85, and N103 together coordinate S-adenosyl-L-methionine.

Belongs to the class I-like SAM-binding methyltransferase superfamily. rRNA adenine N(6)-methyltransferase family. RsmA subfamily.

It localises to the cytoplasm. The catalysed reaction is adenosine(1518)/adenosine(1519) in 16S rRNA + 4 S-adenosyl-L-methionine = N(6)-dimethyladenosine(1518)/N(6)-dimethyladenosine(1519) in 16S rRNA + 4 S-adenosyl-L-homocysteine + 4 H(+). Its function is as follows. Specifically dimethylates two adjacent adenosines (A1518 and A1519) in the loop of a conserved hairpin near the 3'-end of 16S rRNA in the 30S particle. May play a critical role in biogenesis of 30S subunits. The chain is Ribosomal RNA small subunit methyltransferase A from Legionella pneumophila (strain Lens).